The following is a 541-amino-acid chain: Arginine--tRNA ligase (541 aa).

A 'HIGH' region motif is present at residues 119-129 (ANPTGPLHIGH).

This sequence belongs to the class-I aminoacyl-tRNA synthetase family. Monomer.

The protein resides in the cytoplasm. It carries out the reaction tRNA(Arg) + L-arginine + ATP = L-arginyl-tRNA(Arg) + AMP + diphosphate. The protein is Arginine--tRNA ligase of Helicobacter pylori (strain P12).